A 547-amino-acid chain; its full sequence is Delta-guaiene synthase 2 (547 aa).

Mg(2+) is bound by residues Asp299, Asp303, and Asp444. The DDXXD motif signature appears at 299–303 (DDTYD).

Belongs to the terpene synthase family. Mg(2+) serves as cofactor.

It catalyses the reaction (2E,6E)-farnesyl diphosphate = delta-guaiene + diphosphate. The enzyme catalyses (2E,6E)-farnesyl diphosphate = alpha-guaiene + diphosphate. It participates in secondary metabolite biosynthesis; terpenoid biosynthesis. Its function is as follows. Sesquiterpene synthase involved in the biosynthesis of delta-guaiene (53.7%) and alpha-guaiene (44.6%), two structures composed of five- and seven-membered rings. Also produces 1.7% of alpha-humulene. In Aquilaria crassna (Eagle wood), this protein is Delta-guaiene synthase 2 (C3).